Reading from the N-terminus, the 288-residue chain is HTH-type transcriptional repressor CarA (288 aa).

Residues 2 to 73 enclose the HTH merR-type domain; sequence TLRIRTIARM…VSEAIAQVKT (72 aa). A DNA-binding region (H-T-H motif) is located at residues 5 to 24; that stretch reads IRTIARMTGIREATLRAWER. Residues 162-288 enclose the B12-binding domain; it reads GPRALLACPS…NQVRNAQNRP (127 aa).

Belongs to the CarA/CarH B12-binding photoregulator family. In terms of assembly, forms homodimers or oligomers. Interacts with CarS.

Its activity is regulated as follows. Binds cobalamin (vitamin B12), but cobalamin is not required for CarA activity. Interaction with CarS prevents binding to DNA. Functionally, negative regulator of the carB operon in the dark. Binds specifically to the CarA operator, in the region around the carB promoter, which blocks access to the RNA polymerase. This Myxococcus xanthus protein is HTH-type transcriptional repressor CarA (carA).